An 87-amino-acid chain; its full sequence is Putative defensin-like protein 84 (87 aa).

The signal sequence occupies residues Met1–Gly27. 4 disulfide bridges follow: Cys32-Cys73, Cys36-Cys54, Cys42-Cys71, and Cys46-Cys72.

It belongs to the DEFL family.

Its subcellular location is the secreted. In Arabidopsis thaliana (Mouse-ear cress), this protein is Putative defensin-like protein 84.